Here is a 131-residue protein sequence, read N- to C-terminus: NADH dehydrogenase [ubiquinone] 1 alpha subcomplex subunit 6 (131 aa).

Belongs to the complex I LYR family. Mammalian complex I is composed of 45 different subunits.

Its subcellular location is the mitochondrion inner membrane. In terms of biological role, accessory subunit of the mitochondrial membrane respiratory chain NADH dehydrogenase (Complex I), that is believed to be not involved in catalysis. Required for proper complex I assembly. Complex I functions in the transfer of electrons from NADH to the respiratory chain. The immediate electron acceptor for the enzyme is believed to be ubiquinone. The protein is NADH dehydrogenase [ubiquinone] 1 alpha subcomplex subunit 6 of Mus musculus (Mouse).